The chain runs to 248 residues: 2,3-bisphosphoglycerate-dependent phosphoglycerate mutase (248 aa).

Substrate-binding positions include 8 to 15 (RHGESTWN), 21 to 22 (TG), R60, 87 to 90 (ERHY), K98, 114 to 115 (RR), and 183 to 184 (GN). The active-site Tele-phosphohistidine intermediate is the H9. E87 serves as the catalytic Proton donor/acceptor.

The protein belongs to the phosphoglycerate mutase family. BPG-dependent PGAM subfamily. In terms of assembly, homodimer.

The catalysed reaction is (2R)-2-phosphoglycerate = (2R)-3-phosphoglycerate. It functions in the pathway carbohydrate degradation; glycolysis; pyruvate from D-glyceraldehyde 3-phosphate: step 3/5. Its function is as follows. Catalyzes the interconversion of 2-phosphoglycerate and 3-phosphoglycerate. The chain is 2,3-bisphosphoglycerate-dependent phosphoglycerate mutase from Cupriavidus pinatubonensis (strain JMP 134 / LMG 1197) (Cupriavidus necator (strain JMP 134)).